The chain runs to 694 residues: MKFPKLRKRTVYWAVLTVFALFTIHFVFQYKEHNSHRVQPIVLIPKAFPSLILNSFDTQNEELVPIKLLKNCQIIRSYHTGYEENTKLLGQEPQSNFHKFNFTVFSSMKPIGLDLKQCQLLSSSSQVEVNDAVNMDASLHDILGKLLQDIRHGKLEYLQEIAPFFLPELQLQLNLNIVDRFWYRFSGSSIWLDQYNMYFMISRIAYSPHGVKNQPVVSLTYGQLFDRNWNEVKNINLLVPSNDPSKNGGHDSFRIISFPYFLPIPFWHDIDNTDGNYFGPEDPRLILVRNKQGYEEPLLIFNSYHRKFVHYDDDEDSIMGQTVKFQRSMFMCWPWQYQMGKSNVEGTSNPEYDNKVYNRVIELKVKLLADMKSQKNWTPFISEDSTNKFDSYIYFVYRWANLDVLKCSLLGDVAGDCVFDYRLDETLVPQNKVGPLRGGTQLVNLRQVIPRSVYHRLLPSHREIFIGFARTHLDNCGCGKVMYRPNLVILVKDAADKTYYKISHISSSLSFDVPIIGWNVYKPDDLCFDSNVLIPYSVSNWNITSLELDIEGGRWVSNDQLTLTLSISDSTVHRLDIRGLFQSILDLADRSLFIPVDRETRVIDEFQNGLQNPGSNPLNQDVNSLGVNNDNIVCALDASVEFCFEYGAKFSIPKQEEFYEVEQQEFNEELIDPKKHQYFKILGKYLYDHASVNS.

Over 1 to 11 (MKFPKLRKRTV) the chain is Cytoplasmic. A helical transmembrane segment spans residues 12 to 29 (YWAVLTVFALFTIHFVFQ). Residues 30–694 (YKEHNSHRVQ…YLYDHASVNS (665 aa)) are Extracellular-facing. Asn-101 and Asn-542 each carry an N-linked (GlcNAc...) asparagine glycan.

The protein belongs to the BMT family.

Its subcellular location is the membrane. In terms of biological role, beta-mannosyltransferase involved in cell wall biosynthesis through beta-1,2-mannosylation of cell wall phosphopeptidomannan. Plays a role in the ability to produce hyphae in the presence of three bacterial species. This is Beta-mannosyltransferase 8 (BMT8) from Candida albicans (strain SC5314 / ATCC MYA-2876) (Yeast).